Here is a 199-residue protein sequence, read N- to C-terminus: MSRTARIERSTSESSVLVELDLDGTGRTSIDTTVPFYDHMLTALGKHSLMDLTVVAKGDTHIDVHHTVEDTAIVLGQAFRQALGDKAGIRRFADATVPLDEALAHVVVDVSGRPYCVHTGEPEGQEYHLIGGHFTGSLTRHLLESFAFHARIALHVRVLAGRDPHHVVEAQFKALARALRYAVEPDPRVQGIPSTKGAL.

Belongs to the imidazoleglycerol-phosphate dehydratase family.

The protein localises to the cytoplasm. It catalyses the reaction D-erythro-1-(imidazol-4-yl)glycerol 3-phosphate = 3-(imidazol-4-yl)-2-oxopropyl phosphate + H2O. It participates in amino-acid biosynthesis; L-histidine biosynthesis; L-histidine from 5-phospho-alpha-D-ribose 1-diphosphate: step 6/9. This Kineococcus radiotolerans (strain ATCC BAA-149 / DSM 14245 / SRS30216) protein is Imidazoleglycerol-phosphate dehydratase.